A 371-amino-acid polypeptide reads, in one-letter code: Outer membrane protein P2 (371 aa).

A signal peptide spans 1-20 (MKKTLAALIVGAFAASAANA).

It belongs to the Gram-negative porin family. As to quaternary structure, homotrimer.

The protein resides in the cell outer membrane. Its function is as follows. Forms pores that allow passive diffusion of small molecules across the outer membrane. The polypeptide is Outer membrane protein P2 (ompP2) (Haemophilus influenzae).